A 428-amino-acid chain; its full sequence is Histidine--tRNA ligase (428 aa).

This sequence belongs to the class-II aminoacyl-tRNA synthetase family. In terms of assembly, homodimer.

The protein localises to the cytoplasm. The enzyme catalyses tRNA(His) + L-histidine + ATP = L-histidyl-tRNA(His) + AMP + diphosphate + H(+). The chain is Histidine--tRNA ligase from Sorangium cellulosum (strain So ce56) (Polyangium cellulosum (strain So ce56)).